Reading from the N-terminus, the 351-residue chain is L-threonine 3-dehydrogenase (351 aa).

Residue Cys-39 participates in Zn(2+) binding. Residues Thr-41 and His-44 each act as charge relay system in the active site. Residues His-64, Glu-65, Cys-94, Cys-97, Cys-100, and Cys-108 each coordinate Zn(2+). NAD(+) contacts are provided by residues Ile-176, Asp-196, Arg-201, 271 to 273, and 295 to 296; these read LGI and IY.

It belongs to the zinc-containing alcohol dehydrogenase family. Homotetramer. It depends on Zn(2+) as a cofactor.

It localises to the cytoplasm. The catalysed reaction is L-threonine + NAD(+) = (2S)-2-amino-3-oxobutanoate + NADH + H(+). It functions in the pathway amino-acid degradation; L-threonine degradation via oxydo-reductase pathway; glycine from L-threonine: step 1/2. In terms of biological role, catalyzes the NAD(+)-dependent oxidation of L-threonine to 2-amino-3-ketobutyrate. In Francisella tularensis subsp. holarctica (strain OSU18), this protein is L-threonine 3-dehydrogenase.